The chain runs to 949 residues: Glycine dehydrogenase (decarboxylating) (949 aa).

The residue at position 697 (K697) is an N6-(pyridoxal phosphate)lysine.

It belongs to the GcvP family. In terms of assembly, the glycine cleavage system is composed of four proteins: P, T, L and H. The cofactor is pyridoxal 5'-phosphate.

It carries out the reaction N(6)-[(R)-lipoyl]-L-lysyl-[glycine-cleavage complex H protein] + glycine + H(+) = N(6)-[(R)-S(8)-aminomethyldihydrolipoyl]-L-lysyl-[glycine-cleavage complex H protein] + CO2. Its function is as follows. The glycine cleavage system catalyzes the degradation of glycine. The P protein binds the alpha-amino group of glycine through its pyridoxal phosphate cofactor; CO(2) is released and the remaining methylamine moiety is then transferred to the lipoamide cofactor of the H protein. The polypeptide is Glycine dehydrogenase (decarboxylating) (Deinococcus radiodurans (strain ATCC 13939 / DSM 20539 / JCM 16871 / CCUG 27074 / LMG 4051 / NBRC 15346 / NCIMB 9279 / VKM B-1422 / R1)).